The sequence spans 187 residues: Glutathione peroxidase 7 (187 aa).

Positions 1-19 (MVAATVAAAWLLLWAAACA) are cleaved as a signal peptide. Residue Cys57 is part of the active site.

Belongs to the glutathione peroxidase family. Expressed in esophageal epithelial cells; expression is up-regulated after exposure to acidic bile acids.

The protein resides in the secreted. It carries out the reaction 2 glutathione + H2O2 = glutathione disulfide + 2 H2O. In terms of biological role, it protects esophageal epithelia from hydrogen peroxide-induced oxidative stress. It suppresses acidic bile acid-induced reactive oxygen species (ROS) and protects against oxidative DNA damage and double-strand breaks. The chain is Glutathione peroxidase 7 (GPX7) from Homo sapiens (Human).